Reading from the N-terminus, the 597-residue chain is Probable translation initiation factor IF-2 (597 aa).

The region spanning 4–221 (IRQPIIAVLG…LIAGLSQKYL (218 aa)) is the tr-type G domain. Residues 13-20 (GHVDHGKT) are G1. A GTP-binding site is contributed by 13-20 (GHVDHGKT). The interval 38-42 (GITQH) is G2. The interval 77 to 80 (DTPG) is G3. GTP contacts are provided by residues 77 to 81 (DTPGH) and 131 to 134 (NKID). The tract at residues 131-134 (NKID) is G4. Positions 199-201 (SAK) are G5.

This sequence belongs to the TRAFAC class translation factor GTPase superfamily. Classic translation factor GTPase family. IF-2 subfamily.

In terms of biological role, function in general translation initiation by promoting the binding of the formylmethionine-tRNA to ribosomes. Seems to function along with eIF-2. The protein is Probable translation initiation factor IF-2 of Thermococcus onnurineus (strain NA1).